We begin with the raw amino-acid sequence, 543 residues long: Early growth response protein 1 (543 aa).

3 disordered regions span residues 1–105 (MAAA…AESF), 165–213 (TNPP…PTPN), and 264–284 (LGLG…TQQP). The span at 57–66 (GSGSNSSSSS) shows a compositional bias: low complexity. Gly residues predominate over residues 67 to 77 (SGGGGGGGGGS). The span at 167–189 (PPASSSSAPSPAASSASASQSPP) shows a compositional bias: low complexity. Residue lysine 305 forms a Glycyl lysine isopeptide (Lys-Gly) (interchain with G-Cter in SUMO2) linkage. The disordered stretch occupies residues 318 to 339 (PSRMRKYPNRPSKTPPHERPYA). 3 consecutive C2H2-type zinc fingers follow at residues 338–362 (YACP…IRIH), 368–390 (FQCR…IRTH), and 396–418 (FACD…TKIH). A disordered region spans residues 409 to 487 (DERKRHTKIH…GSSTYPSPVH (79 aa)). Positions 413–423 (RHTKIHLRQKD) are enriched in basic residues. Residues 429 to 486 (SVVASSATSSLSSYPSPVATSYPSPVTTSYPSPATTSYPSPVPTSFSSPGSSTYPSPV) show a composition bias toward low complexity.

The protein belongs to the EGR C2H2-type zinc-finger protein family. Interacts with SNAI1 and SP1 upon 12-O-tetradecanoylphorbol-13-acetate (TPA) induction. Detected in neutrophils (at protein level).

The protein resides in the nucleus. It localises to the cytoplasm. Its function is as follows. Transcriptional regulator. Recognizes and binds to the DNA sequence 5'-GCG(T/G)GGGCG-3'(EGR-site) in the promoter region of target genes. Binds double-stranded target DNA, irrespective of the cytosine methylation status. Regulates the transcription of numerous target genes, and thereby plays an important role in regulating the response to growth factors, DNA damage, and ischemia. Plays a role in the regulation of cell survival, proliferation and cell death. Activates expression of p53/TP53 and TGFB1, and thereby helps prevent tumor formation. Required for normal progress through mitosis and normal proliferation of hepatocytes after partial hepatectomy. Mediates responses to ischemia and hypoxia; regulates the expression of proteins such as IL1B and CXCL2 that are involved in inflammatory processes and development of tissue damage after ischemia. Regulates biosynthesis of luteinizing hormone (LHB) in the pituitary. Regulates the amplitude of the expression rhythms of clock genes: BMAL1, PER2 and NR1D1 in the liver via the activation of PER1 (clock repressor) transcription. Regulates the rhythmic expression of core-clock gene BMAL1 in the suprachiasmatic nucleus (SCN). The chain is Early growth response protein 1 (EGR1) from Homo sapiens (Human).